A 337-amino-acid chain; its full sequence is Diacylglycerol O-acyltransferase 2-like protein 6 (337 aa).

The next 2 membrane-spanning stretches (helical) occupy residues 22-42 (IPVY…LLLF) and 102-122 (YIIL…NFAT).

Belongs to the diacylglycerol acyltransferase family.

Its subcellular location is the endoplasmic reticulum membrane. It carries out the reaction 1,2-di-(9Z-octadecenoyl)-sn-glycerol + (9Z)-octadecenoyl-CoA = 1,2,3-tri-(9Z-octadecenoyl)-glycerol + CoA. Its function is as follows. Diglyceride acyltransferase that uses fatty acyl-CoA as substrate. Particularly active with oleate as a substrate. Has no wax synthase activity to produce wax esters. The sequence is that of Diacylglycerol O-acyltransferase 2-like protein 6 (Dgat2l6) from Mus musculus (Mouse).